We begin with the raw amino-acid sequence, 301 residues long: Probable alpha-L-glutamate ligase (301 aa).

The ATP-grasp domain maps to 104 to 287; sequence LQLLSRKGIG…IAGLIVAYME (184 aa). Residues K141, 178–179, D187, and 211–213 contribute to the ATP site; these read EF and RSN. Mg(2+) contacts are provided by D248, E260, and N262. Positions 248, 260, and 262 each coordinate Mn(2+).

It belongs to the RimK family. The cofactor is Mg(2+). It depends on Mn(2+) as a cofactor.

This Cellvibrio japonicus (strain Ueda107) (Pseudomonas fluorescens subsp. cellulosa) protein is Probable alpha-L-glutamate ligase.